The primary structure comprises 70 residues: uncharacterized protein (70 aa).

The segment at leucine 40–serine 70 is disordered. A compositionally biased stretch (polar residues) spans serine 51–glutamate 61.

This is an uncharacterized protein from Bdellovibrio phage phiMH2K (Bacteriophage phiMH2K).